A 1068-amino-acid chain; its full sequence is Huntingtin-interacting protein 1-related protein (1068 aa).

Residue methionine 1 is modified to N-acetylmethionine. An ENTH domain is found at 23–151 (EREQFDKTQA…SFHLKHPQFP (129 aa)). Residues 347-599 (SVKDDRDLQI…RSSQEQGELQ (253 aa)) adopt a coiled-coil conformation. 3 disordered regions span residues 424–443 (LEGE…ASAT), 529–549 (ARAQ…SSRL), and 582–608 (AALS…RESQ). Composition is skewed to basic and acidic residues over residues 425–443 (EGER…ASAT) and 539–549 (EQSKSELSSRL). The span at 590-600 (RSSQEQGELQG) shows a compositional bias: low complexity. The 242-residue stretch at 771-1012 (SLDVRQEELG…ELRKQHYVLA (242 aa)) folds into the I/LWEQ domain. An important for actin binding region spans residues 867–924 (RWTEGLISASKAVGWGATQLVEAADKVVLHTGKYEELIVCSHEIAASTAQLVAASKVK). The interval 1016 to 1060 (GSPGEEVAIRPSTAPRSVTTKKPPLAQKPSVAPRQDHQLDKKDGI) is disordered. Position 1017 is a phosphoserine (serine 1017). The segment covering 1049–1059 (RQDHQLDKKDG) has biased composition (basic and acidic residues).

This sequence belongs to the SLA2 family. Homodimer. Interacts with actin; homodimerization promotes actin binding. Interacts with CLTB. Interacts with HIP1. Interacts (via ENTH and I/LWEQ domains) with BCL2L10. As to expression, brain, heart, kidney, pancreas, and liver, but not in lung or placenta.

It is found in the cytoplasm. The protein localises to the perinuclear region. The protein resides in the endomembrane system. It localises to the cytoplasmic vesicle. Its subcellular location is the clathrin-coated vesicle membrane. In terms of biological role, component of clathrin-coated pits and vesicles, that may link the endocytic machinery to the actin cytoskeleton. Binds 3-phosphoinositides (via ENTH domain). May act through the ENTH domain to promote cell survival by stabilizing receptor tyrosine kinases following ligand-induced endocytosis. The polypeptide is Huntingtin-interacting protein 1-related protein (HIP1R) (Homo sapiens (Human)).